The following is a 208-amino-acid chain: Imidazole glycerol phosphate synthase subunit HisH (208 aa).

The 206-residue stretch at 1-206 (MFAIVDYDTG…KEMVSANDFS (206 aa)) folds into the Glutamine amidotransferase type-1 domain. The active-site Nucleophile is C79. Active-site residues include H181 and E183.

As to quaternary structure, heterodimer of HisH and HisF.

Its subcellular location is the cytoplasm. It carries out the reaction 5-[(5-phospho-1-deoxy-D-ribulos-1-ylimino)methylamino]-1-(5-phospho-beta-D-ribosyl)imidazole-4-carboxamide + L-glutamine = D-erythro-1-(imidazol-4-yl)glycerol 3-phosphate + 5-amino-1-(5-phospho-beta-D-ribosyl)imidazole-4-carboxamide + L-glutamate + H(+). It catalyses the reaction L-glutamine + H2O = L-glutamate + NH4(+). It participates in amino-acid biosynthesis; L-histidine biosynthesis; L-histidine from 5-phospho-alpha-D-ribose 1-diphosphate: step 5/9. Its function is as follows. IGPS catalyzes the conversion of PRFAR and glutamine to IGP, AICAR and glutamate. The HisH subunit catalyzes the hydrolysis of glutamine to glutamate and ammonia as part of the synthesis of IGP and AICAR. The resulting ammonia molecule is channeled to the active site of HisF. The polypeptide is Imidazole glycerol phosphate synthase subunit HisH (Lactiplantibacillus plantarum (strain ATCC BAA-793 / NCIMB 8826 / WCFS1) (Lactobacillus plantarum)).